The sequence spans 155 residues: Protein SprT-like (155 aa).

Residues 7–144 form the SprT-like domain; the sequence is QRHMEEVSLQ…CGSCGGKLKQ (138 aa). His67 contributes to the Zn(2+) binding site. Glu68 is a catalytic residue. His71 contacts Zn(2+).

This sequence belongs to the SprT family. Zn(2+) is required as a cofactor.

The protein localises to the cytoplasm. This is Protein SprT-like from Listeria welshimeri serovar 6b (strain ATCC 35897 / DSM 20650 / CCUG 15529 / CIP 8149 / NCTC 11857 / SLCC 5334 / V8).